The following is a 360-amino-acid chain: Uroporphyrinogen decarboxylase (360 aa).

Substrate is bound by residues 31–35 (RQAGR), Asp-81, Tyr-157, Thr-212, and His-333.

It belongs to the uroporphyrinogen decarboxylase family. Homodimer.

The protein localises to the cytoplasm. It catalyses the reaction uroporphyrinogen III + 4 H(+) = coproporphyrinogen III + 4 CO2. Its pathway is porphyrin-containing compound metabolism; protoporphyrin-IX biosynthesis; coproporphyrinogen-III from 5-aminolevulinate: step 4/4. Functionally, catalyzes the decarboxylation of four acetate groups of uroporphyrinogen-III to yield coproporphyrinogen-III. This chain is Uroporphyrinogen decarboxylase, found in Janthinobacterium sp. (strain Marseille) (Minibacterium massiliensis).